The sequence spans 416 residues: Serine protease inhibitor A3K (416 aa).

The first 20 residues, 1–20 (MAFIAALGLLMAGICPAVLC), serve as a signal peptide directing secretion. N-linked (GlcNAc...) asparagine glycosylation is found at Asn102, Asn182, Asn220, and Asn267. Residues 365 to 392 (GTEGAAATAVTAALKSLPQTIPLLNFNR) are RCL.

This sequence belongs to the serpin family. Post-translationally, N-glycosylated. Liver and plasma.

It localises to the secreted. Functionally, binds to and inhibits kallikreins. Inhibits trypsin but not chymotrypsin or elastase. This chain is Serine protease inhibitor A3K (Serpina3k), found in Rattus norvegicus (Rat).